The chain runs to 429 residues: Adenylosuccinate synthetase (429 aa).

Residues 12-18 (GDEGKGK) and 40-42 (GHT) contribute to the GTP site. Residue Asp13 is the Proton acceptor of the active site. Mg(2+) contacts are provided by Asp13 and Gly40. IMP contacts are provided by residues 13–16 (DEGK), 38–41 (NAGH), Thr128, Arg142, Gln223, Thr238, and Arg302. His41 (proton donor) is an active-site residue. A substrate-binding site is contributed by 298–304 (TVTGRPR). Residues Arg304, 330-332 (LLD), and 412-414 (SVG) contribute to the GTP site.

The protein belongs to the adenylosuccinate synthetase family. As to quaternary structure, homodimer. It depends on Mg(2+) as a cofactor.

It localises to the cytoplasm. It carries out the reaction IMP + L-aspartate + GTP = N(6)-(1,2-dicarboxyethyl)-AMP + GDP + phosphate + 2 H(+). Its pathway is purine metabolism; AMP biosynthesis via de novo pathway; AMP from IMP: step 1/2. In terms of biological role, plays an important role in the de novo pathway of purine nucleotide biosynthesis. Catalyzes the first committed step in the biosynthesis of AMP from IMP. The protein is Adenylosuccinate synthetase of Limosilactobacillus fermentum (strain NBRC 3956 / LMG 18251) (Lactobacillus fermentum).